The following is a 492-amino-acid chain: 3-octaprenyl-4-hydroxybenzoate carboxy-lyase (492 aa).

Asparagine 175 lines the Mn(2+) pocket. Residues 178 to 180, 192 to 194, and 197 to 198 contribute to the prenylated FMN site; these read IYR, RWL, and RG. Glutamate 241 provides a ligand contact to Mn(2+). The Proton donor role is filled by aspartate 290.

The protein belongs to the UbiD family. As to quaternary structure, homohexamer. Prenylated FMN serves as cofactor. Mn(2+) is required as a cofactor.

The protein resides in the cell membrane. It catalyses the reaction a 4-hydroxy-3-(all-trans-polyprenyl)benzoate + H(+) = a 2-(all-trans-polyprenyl)phenol + CO2. It functions in the pathway cofactor biosynthesis; ubiquinone biosynthesis. Catalyzes the decarboxylation of 3-octaprenyl-4-hydroxy benzoate to 2-octaprenylphenol, an intermediate step in ubiquinone biosynthesis. The protein is 3-octaprenyl-4-hydroxybenzoate carboxy-lyase of Salmonella typhimurium (strain LT2 / SGSC1412 / ATCC 700720).